The following is a 439-amino-acid chain: Glutamate-1-semialdehyde 2,1-aminomutase (439 aa).

Lysine 273 is subject to N6-(pyridoxal phosphate)lysine.

The protein belongs to the class-III pyridoxal-phosphate-dependent aminotransferase family. HemL subfamily. As to quaternary structure, homodimer. Requires pyridoxal 5'-phosphate as cofactor.

It localises to the cytoplasm. The enzyme catalyses (S)-4-amino-5-oxopentanoate = 5-aminolevulinate. Its pathway is porphyrin-containing compound metabolism; protoporphyrin-IX biosynthesis; 5-aminolevulinate from L-glutamyl-tRNA(Glu): step 2/2. The sequence is that of Glutamate-1-semialdehyde 2,1-aminomutase from Paenarthrobacter aurescens (strain TC1).